The primary structure comprises 209 residues: SAGA-associated factor 11 homolog 1 (209 aa).

The segment at 1–36 (MSRTIVVKNPRTSGKDEDKAQIPSQDELPSGSSGAK) is disordered. The SGF11-type zinc-finger motif lies at 120–141 (CCCPNCERMVAAVRFAPHLQTC). The segment covering 156 to 166 (LTVSSRSSSTS) has biased composition (low complexity). Residues 156-209 (LTVSSRSSSTSTGGGQANEKSTDDEDWSLDSRPGKSTKNSRNKGSKKNQKNKLK) form a disordered region. Positions 193 to 209 (KNSRNKGSKKNQKNKLK) are enriched in basic residues.

Belongs to the SGF11 family. As to quaternary structure, component of some SAGA transcription coactivator-HAT complexes, at least composed of Ada2b, not/nonstop, Pcaf/Gcn5, Sgf11 and Spt3. Within the SAGA complex, Sgf11, e(y)2, and not/nonstop form an additional subcomplex of SAGA called the DUB module (deubiquitination module). Interacts directly with not/nonstop. Interacts with the AMEX complex component xmas-2. Interacts with Cbp80; important for promoter recruitment of Sgf11 that is not associated with the DUB module.

Its subcellular location is the nucleus. It is found in the nucleoplasm. It localises to the cytoplasm. Component of the transcription regulatory histone acetylation (HAT) complex SAGA, a multiprotein complex that activates transcription by remodeling chromatin and mediating histone acetylation and deubiquitination. Within the SAGA complex, participates in a subcomplex that specifically deubiquitinates histone H2B. The SAGA complex is recruited to specific gene promoters by activators, where it is required for transcription. Required for nuclear receptor-mediated transactivation. Binds independently on SAGA to promoters in an RNA-dependent manner. Binds to mRNA and is essential for total mRNA export from the nucleus. Required to counteract heterochromatin silencing. Controls the development of neuronal connectivity in visual system by being required for accurate axon targeting in the optic lobe. Required for expression of ecdysone-induced genes such as br/broad. This chain is SAGA-associated factor 11 homolog 1, found in Drosophila willistoni (Fruit fly).